The sequence spans 107 residues: Nucleoid-associated protein Xfasm12_1216 (107 aa).

This sequence belongs to the YbaB/EbfC family. In terms of assembly, homodimer.

The protein resides in the cytoplasm. Its subcellular location is the nucleoid. Functionally, binds to DNA and alters its conformation. May be involved in regulation of gene expression, nucleoid organization and DNA protection. The chain is Nucleoid-associated protein Xfasm12_1216 from Xylella fastidiosa (strain M12).